The following is a 67-amino-acid chain: ATP synthase protein 8 (67 aa).

The chain crosses the membrane as a helical span at residues 8–24 (TWFITILSMLMTLFILF). Lysine 54 carries the N6-acetyllysine; alternate modification. Lysine 54 carries the post-translational modification N6-succinyllysine; alternate. An N6-acetyllysine modification is found at lysine 57.

Belongs to the ATPase protein 8 family. In terms of assembly, F-type ATPases have 2 components, CF(1) - the catalytic core - and CF(0) - the membrane proton channel. Component of an ATP synthase complex composed of ATP5PB, ATP5MC1, ATP5F1E, ATP5PD, ATP5ME, ATP5PF, ATP5MF, MT-ATP6, MT-ATP8, ATP5F1A, ATP5F1B, ATP5F1D, ATP5F1C, ATP5PO, ATP5MG, ATP5MK and ATP5MJ. Interacts with PRICKLE3.

The protein localises to the mitochondrion membrane. Mitochondrial membrane ATP synthase (F(1)F(0) ATP synthase or Complex V) produces ATP from ADP in the presence of a proton gradient across the membrane which is generated by electron transport complexes of the respiratory chain. F-type ATPases consist of two structural domains, F(1) - containing the extramembraneous catalytic core and F(0) - containing the membrane proton channel, linked together by a central stalk and a peripheral stalk. During catalysis, ATP synthesis in the catalytic domain of F(1) is coupled via a rotary mechanism of the central stalk subunits to proton translocation. Part of the complex F(0) domain. Minor subunit located with subunit a in the membrane. The chain is ATP synthase protein 8 (MT-ATP8) from Vicugna pacos (Alpaca).